A 522-amino-acid chain; its full sequence is Perilipin-1 (522 aa).

Position 81 is a phosphoserine (Ser-81). Thr-85 is modified (phosphothreonine). 5 positions are modified to phosphoserine: Ser-126, Ser-130, Ser-132, Ser-137, and Ser-174. Disordered regions lie at residues 195 to 217 (DKEESAPAPGHQQAQKSPKAKPS) and 287 to 318 (LAAAQEEDHEDQTDTEGEDTEEEEELETEENK). Positions 291–314 (QEEDHEDQTDTEGEDTEEEEELET) are enriched in acidic residues. The segment at 291 to 319 (QEEDHEDQTDTEGEDTEEEEELETEENKF) is required for interaction with CIDEC. Phosphothreonine is present on residues Thr-299 and Thr-301. Residues Ser-382, Ser-384, and Ser-408 each carry the phosphoserine modification. Residues 413 to 522 (ESEFRDIDNP…THYSQLRKKS (110 aa)) are disordered. Basic and acidic residues predominate over residues 414–435 (SEFRDIDNPPAEVERREAERRA). Phosphoserine is present on residues Ser-436, Ser-497, and Ser-499.

The protein belongs to the perilipin family. Interacts with ABHD5. Interacts with CIDEC. Interacts with AQP7. In terms of processing, major cAMP-dependent protein kinase-substrate in adipocytes, also dephosphorylated by PP1. When phosphorylated, may be maximally sensitive to HSL and when unphosphorylated, may play a role in the inhibition of lipolysis, by acting as a barrier in lipid droplet. Detected in adipocytes from white adipose tissue (at protein level). Detected in visceral adipose tissue and mammary gland.

The protein localises to the endoplasmic reticulum. It is found in the lipid droplet. Functionally, modulator of adipocyte lipid metabolism. Coats lipid storage droplets to protect them from breakdown by hormone-sensitive lipase (HSL). Its absence may result in leanness. Plays a role in unilocular lipid droplet formation by activating CIDEC. Their interaction promotes lipid droplet enlargement and directional net neutral lipid transfer. May modulate lipolysis and triglyceride levels. The polypeptide is Perilipin-1 (PLIN1) (Homo sapiens (Human)).